Here is a 228-residue protein sequence, read N- to C-terminus: Lipoprotein-releasing system ATP-binding protein LolD (228 aa).

Positions 5 to 228 (FALSAISKSF…SGTLQNYTDY (224 aa)) constitute an ABC transporter domain. An ATP-binding site is contributed by 40-47 (GPSGSGKS).

It belongs to the ABC transporter superfamily. Lipoprotein translocase (TC 3.A.1.125) family. In terms of assembly, the complex is composed of two ATP-binding proteins (LolD) and two transmembrane proteins (LolC and LolE).

Its subcellular location is the cell inner membrane. In terms of biological role, part of the ABC transporter complex LolCDE involved in the translocation of mature outer membrane-directed lipoproteins, from the inner membrane to the periplasmic chaperone, LolA. Responsible for the formation of the LolA-lipoprotein complex in an ATP-dependent manner. In Ehrlichia ruminantium (strain Gardel), this protein is Lipoprotein-releasing system ATP-binding protein LolD.